Consider the following 878-residue polypeptide: MSEGSISLCFLGSLPNDVVNFVRAVVRILADIRGIVVEERSAEELSLSNPPTLTLAALDNTEPGSPAICSLYAFLTHLCTALETIGRHAEVSSLQHVLDLCRTTTDRGGLAIIRDESSGWTSGPTQLQSVQSLIEAWLEALNAAESATQLPAPLPAKTPNTWPMTLAEKILVQHAFSLPSPQGVSVGELMRVSVDWVIASELSWVGMKHSMISIGEQPTVWRNDRFWLAGDHTVDPRTYHQPRVQELIGGMEDAKKTFKMTENQGSNYTILHTEFVRERAEPGMLVIGSDSHTCSAGAVSSLAIGLGAADVMAALATGETWFKSPESIRVEFSGEPAWYIRGKDIILYILKKLKRNTHAADRIVEFGGPGAKHLSCDARFAICNMCTELGAITGIFVPDEVTHQFISNRRHSRYRSNSVYFQPDSDASYAATFQIDLSEVESFIALYPSPDNVVPVTETLDMPLDGCFIGACTTTEEDLVLAALVLEVGLQQGLELAIGKRMVVPGSLPIVSNLRVLGLLDVFEQAGFEQPAVSCSLCLGMGADRAGHGENWLSSQNRNFKNRMGHGSIGHICSAAVVAASSFSMRVTDPRPLLSQIPPERYQTLLDKCRDWRSAEPAARRHPGKIAIANQRTKPAPTMPAYVEPYRSFQPPVPPSSDQPQSMKDHGKTSNGENGILISKVYALGDFVDTDAIIPAAFILESPTDVLLGSHCLEFTNPDFRSQVRAGLEVVVAGKAFGCGSSREEAPRALKGLGVKCVIAKSFSFIYGRNQPTIGLLGIVITDERFYDAARTGVAIEINPSARTVTVAGQSFPFVMDDMELALIRRDGLATAYKALGKGVFRSLCADVPGKGGCGQTQGTIYMQVSMSLRVTPAVSRD.

Substrate contacts are provided by residues glutamine 173 and 290–292; that span reads DSH. [4Fe-4S] cluster contacts are provided by cysteine 472, cysteine 535, and cysteine 538. 2 residues coordinate substrate: arginine 558 and arginine 563. Residues 626–671 form a disordered region; that stretch reads IAIANQRTKPAPTMPAYVEPYRSFQPPVPPSSDQPQSMKDHGKTSN. Residue 742 to 743 participates in substrate binding; sequence SR.

It belongs to the aconitase/IPM isomerase family.

Its pathway is antifungal biosynthesis. Functionally, aconitase; part of the gene cluster that mediates the de novo generation of L-homotyrosine from acetyl-CoA and 4-hydroxyphenyl-pyruvate. L-homotyrosine is a building block of echinocandin B, a fungal lipidated cyclic hexapeptide that acts as an antifungal agent. L-homotyrosine 4-hydroxyphenyl-pyruvate first undergoes an aldol-type condensation by htyA with the C-2 of acetyl-CoA followed by the release of CoA to form 2-(4-hydroxybenzyl)-malate. This is followed by isomerization of 2-(4-hydroxy-benzyl)-malate to 3-(4-hydroxybenzyl)-malate by htyD. Thereafter, 3-(4-hydroxybenzyl)-malate undergoes decarboxylation and oxidation to form 2-oxo-4-(4-hydroxybenzyl)butanoic acid, coupled to reduction of NAD(+) to NADH by htyC. The product then undergoes transamination catalyzed by htyB to form L-homotyrosine. The protein is Aconitase htyD of Aspergillus rugulosus (Emericella rugulosa).